The primary structure comprises 195 residues: Transmembrane protein 126A (195 aa).

At 1–33 (MENHKSNNKENITIVDISRKINQLPEAERNLLE) the chain is on the mitochondrial matrix side. Residues 34–54 (NGSVYVGLNAALCGLIANSLF) traverse the membrane as a helical segment. Topologically, residues 55–56 (RR) are mitochondrial intermembrane. A helical membrane pass occupies residues 57–77 (ILNVTKARIAAGLPMAGIPFL). Topologically, residues 78-110 (TTDLTYRCFVSFPLNTGDLDCETCTITRSGLTG) are mitochondrial matrix. A helical membrane pass occupies residues 111–131 (LVIGGLYPVFLAIPVNGGLAA). Residues 132–158 (RYQSALLPHKGNILSYWIRTSKPVFRK) lie on the Mitochondrial intermembrane side of the membrane. A helical membrane pass occupies residues 159-175 (MLFPILLQTMFSAYLGS). Over 176–195 (EQYKLLIKALQLSEPGKEIH) the chain is Mitochondrial matrix.

The protein belongs to the TMEM126 family. Interacts with OXA1L; promoting cotranslational quality control in mitochondria. Strongly expressed in brain, cerebellum, skeletal muscle, testis. High expression also found in fetal brain, fetal retinal pigmentary epithelium, and fetal retina. Highly expressed in retinal ganglion cells.

The protein localises to the mitochondrion inner membrane. In terms of biological role, protein required for the cotranslational protein quality control in the inner membrane of the mitochondria. Associates with newly synthesized polypeptides and may act as a chaperone that cooperates with OXA1L for the insertion of newly synthesized mitochondrial proteins into the inner membrane. Required for the assembly of the ND4 module of mitochondrial complex I. The protein is Transmembrane protein 126A of Homo sapiens (Human).